Here is a 457-residue protein sequence, read N- to C-terminus: MQKYISEARQLLALAIPVILAQIAQTAMGFVDTVMAGGYSATDMAAVAIGTSIWLPAILFGHGLLLALTPVIAQLNGSGRRERIAHQVRQGFWLAGCVSVLIMFVLWNAGYIIRSMHNIDPALADKAVGYLRALLWGAPGYLFFQVARNQCEGLAKTKPGMVIGFLGLLVNIPVNYIFIYGHFGMPELGGVGCGVATAAVYWVMFIAMASYVKRARSMRDIRNERGFSKPDTAVMKRLVQLGLPIALALFFEVTLFAVVALLVSPLGIVDVAGHQIALNFSSLMFVLPMSLAAAVTIRVGYRLGQGSTLDAQTAARTGLGVGVCMAVITAIFTVTLREPIALLYNDNPEVVTLAAQLMLLAAVYQISDSIQVIGSGILRGYKDTRSIFFITFTAYWVLGLPSGYILALTDLVVDRMGPAGFWMGFIIGLTSAAIMMMLRMRYLQRQSSAIILQRAAR.

A run of 12 helical transmembrane segments spans residues 11–31, 53–73, 93–113, 127–147, 160–180, 188–208, 243–263, 276–296, 314–334, 357–377, 387–407, and 418–438; these read LLALAIPVILAQIAQTAMGFV, IWLPAILFGHGLLLALTPVIA, WLAGCVSVLIMFVLWNAGYII, AVGYLRALLWGAPGYLFFQVA, GMVIGFLGLLVNIPVNYIFIY, LGGVGCGVATAAVYWVMFIAM, LPIALALFFEVTLFAVVALLV, IALNFSSLMFVLPMSLAAAVT, AARTGLGVGVCMAVITAIFTV, LMLLAAVYQISDSIQVIGSGI, IFFITFTAYWVLGLPSGYILA, and PAGFWMGFIIGLTSAAIMMML.

This sequence belongs to the multi antimicrobial extrusion (MATE) (TC 2.A.66.1) family. MdtK subfamily.

It is found in the cell inner membrane. In terms of biological role, multidrug efflux pump that functions probably as a Na(+)/drug antiporter. The protein is Multidrug resistance protein MdtK of Citrobacter koseri (strain ATCC BAA-895 / CDC 4225-83 / SGSC4696).